We begin with the raw amino-acid sequence, 238 residues long: MGCSGCSGGCGSSCGGCGSSCGGCGSGYGGCGSGCCVPVCCCKPVCCCVPACSCSSCGSCGGSKGVCGSCGGCKGGCGSCGGSKGGCGSSCCVPVCCSSSCGSCGGSKGVCGFRGGSKGGCGSCGCSQCSCYKPCCCSSGCGSSCCQSSCCKPSCSQSSCCKPCCSQSSCCKPCCCSSGCGSSCCQSSCCKPCCSQSSCCKPCCCSSGCGSSCCQSSCCKPCSSQSSCCVPICCQCKI.

Repeat copies occupy residues 35 to 38 (CCVP), 41 to 44 (CCKP), 47 to 50 (CCVP), 91 to 94 (CCVP), 150 to 153 (CCKP), 160 to 163 (CCKP), 170 to 173 (CCKP), 189 to 192 (CCKP), 199 to 202 (CCKP), 218 to 221 (CCKP), and 228 to 231 (CCVP). The interval 35-231 (CCVPVCCCKP…CSSQSSCCVP (197 aa)) is 11 X 4 AA repeats of C-C-X-P.

The protein belongs to the KRTAP type 5 family. Interacts with hair keratins. As to expression, restricted to hair root, not detected in any other tissues.

In the hair cortex, hair keratin intermediate filaments are embedded in an interfilamentous matrix, consisting of hair keratin-associated protein (KRTAP), which are essential for the formation of a rigid and resistant hair shaft through their extensive disulfide bond cross-linking with abundant cysteine residues of hair keratins. The matrix proteins include the high-sulfur and high-glycine-tyrosine keratins. The protein is Keratin-associated protein 5-3 (KRTAP5-3) of Homo sapiens (Human).